The primary structure comprises 313 residues: Proline iminopeptidase (313 aa).

An AB hydrolase-1 domain is found at Lys-35–Glu-298. Ser-110 functions as the Nucleophile in the catalytic mechanism. Residue Asp-266 is part of the active site. His-294 acts as the Proton donor in catalysis.

Belongs to the peptidase S33 family.

It is found in the cytoplasm. The catalysed reaction is Release of N-terminal proline from a peptide.. Its function is as follows. Specifically catalyzes the removal of N-terminal proline residues from peptides. The polypeptide is Proline iminopeptidase (pip) (Xylella fastidiosa (strain Temecula1 / ATCC 700964)).